The primary structure comprises 157 residues: Ribosome-binding factor A (157 aa).

The interval 127–157 is disordered; sequence QQQFGSEEASVEDEVLGDDVADDADETEGKD. Residues 135-157 show a composition bias toward acidic residues; the sequence is ASVEDEVLGDDVADDADETEGKD.

Belongs to the RbfA family. In terms of assembly, monomer. Binds 30S ribosomal subunits, but not 50S ribosomal subunits or 70S ribosomes.

It localises to the cytoplasm. In terms of biological role, one of several proteins that assist in the late maturation steps of the functional core of the 30S ribosomal subunit. Associates with free 30S ribosomal subunits (but not with 30S subunits that are part of 70S ribosomes or polysomes). Required for efficient processing of 16S rRNA. May interact with the 5'-terminal helix region of 16S rRNA. The polypeptide is Ribosome-binding factor A (Shewanella baltica (strain OS195)).